We begin with the raw amino-acid sequence, 399 residues long: Elongation factor Tu (399 aa).

Residues 10–209 (KPHVNIGTIG…KVDEYIPTPV (200 aa)) enclose the tr-type G domain. The G1 stretch occupies residues 19–26 (GHVDHGKT). 19 to 26 (GHVDHGKT) lines the GTP pocket. Thr26 is a Mg(2+) binding site. The tract at residues 60 to 64 (GITIA) is G2. The G3 stretch occupies residues 81 to 84 (DCPG). GTP-binding positions include 81-85 (DCPGH) and 136-139 (NKAD). Positions 136-139 (NKAD) are G4. Residues 174-176 (SAL) form a G5 region.

It belongs to the TRAFAC class translation factor GTPase superfamily. Classic translation factor GTPase family. EF-Tu/EF-1A subfamily. As to quaternary structure, monomer.

Its subcellular location is the cytoplasm. The catalysed reaction is GTP + H2O = GDP + phosphate + H(+). In terms of biological role, GTP hydrolase that promotes the GTP-dependent binding of aminoacyl-tRNA to the A-site of ribosomes during protein biosynthesis. In Campylobacter curvus (strain 525.92), this protein is Elongation factor Tu.